Reading from the N-terminus, the 241-residue chain is Zinc finger CCHC domain-containing protein 24 (241 aa).

2 positions are modified to phosphoserine: serine 65 and serine 93. The segment at 132–149 (YLCHLCFNKGHYIKDCPQ) adopts a CCHC-type zinc-finger fold.

This Macaca fascicularis (Crab-eating macaque) protein is Zinc finger CCHC domain-containing protein 24 (ZCCHC24).